Reading from the N-terminus, the 658-residue chain is Biosynthetic arginine decarboxylase (658 aa).

Lys-127 bears the N6-(pyridoxal phosphate)lysine mark. Residue 307 to 317 (FDVGGGLGVDY) participates in substrate binding.

The protein belongs to the Orn/Lys/Arg decarboxylase class-II family. SpeA subfamily. As to quaternary structure, homotetramer. The cofactor is Mg(2+). It depends on pyridoxal 5'-phosphate as a cofactor.

The protein localises to the periplasm. It carries out the reaction L-arginine + H(+) = agmatine + CO2. Its pathway is amine and polyamine biosynthesis; agmatine biosynthesis; agmatine from L-arginine: step 1/1. Catalyzes the biosynthesis of agmatine from arginine. This Escherichia coli O157:H7 protein is Biosynthetic arginine decarboxylase (speA).